Here is a 448-residue protein sequence, read N- to C-terminus: Tubulin beta chain (448 aa).

Positions 11, 69, 138, 142, 143, 144, 204, and 226 each coordinate GTP. Glutamate 69 lines the Mg(2+) pocket. The disordered stretch occupies residues 425 to 448 (YQDASISEGEEEYLEEEEPLEHEE). Acidic residues predominate over residues 432–448 (EGEEEYLEEEEPLEHEE).

Belongs to the tubulin family. Dimer of alpha and beta chains. A typical microtubule is a hollow water-filled tube with an outer diameter of 25 nm and an inner diameter of 15 nM. Alpha-beta heterodimers associate head-to-tail to form protofilaments running lengthwise along the microtubule wall with the beta-tubulin subunit facing the microtubule plus end conferring a structural polarity. Microtubules usually have 13 protofilaments but different protofilament numbers can be found in some organisms and specialized cells. It depends on Mg(2+) as a cofactor.

The protein resides in the cytoplasm. The protein localises to the cytoskeleton. Tubulin is the major constituent of microtubules, a cylinder consisting of laterally associated linear protofilaments composed of alpha- and beta-tubulin heterodimers. Microtubules grow by the addition of GTP-tubulin dimers to the microtubule end, where a stabilizing cap forms. Below the cap, tubulin dimers are in GDP-bound state, owing to GTPase activity of alpha-tubulin. This is Tubulin beta chain (benA56) from Aspergillus oryzae (strain ATCC 42149 / RIB 40) (Yellow koji mold).